The primary structure comprises 327 residues: Beta-ketoacyl-[acyl-carrier-protein] synthase III (327 aa).

Residues Cys114 and His254 contribute to the active site. The ACP-binding stretch occupies residues Gln255–Arg259. Residue Asn284 is part of the active site.

This sequence belongs to the thiolase-like superfamily. FabH family. As to quaternary structure, homodimer.

It is found in the cytoplasm. It catalyses the reaction malonyl-[ACP] + acetyl-CoA + H(+) = 3-oxobutanoyl-[ACP] + CO2 + CoA. Its pathway is lipid metabolism; fatty acid biosynthesis. Catalyzes the condensation reaction of fatty acid synthesis by the addition to an acyl acceptor of two carbons from malonyl-ACP. Catalyzes the first condensation reaction which initiates fatty acid synthesis and may therefore play a role in governing the total rate of fatty acid production. Possesses both acetoacetyl-ACP synthase and acetyl transacylase activities. Its substrate specificity determines the biosynthesis of branched-chain and/or straight-chain of fatty acids. The polypeptide is Beta-ketoacyl-[acyl-carrier-protein] synthase III (Lactobacillus helveticus (strain DPC 4571)).